A 565-amino-acid polypeptide reads, in one-letter code: Protein unc-87 (565 aa).

The span at Met-1 to Ser-27 shows a compositional bias: low complexity. Disordered regions lie at residues Met-1 to Ser-83 and Ile-237 to Asn-262. A compositionally biased stretch (basic and acidic residues) spans Glu-54–Asn-69. Calponin-like repeat units follow at residues Ile-237–Asn-262, Val-285–Cys-310, and Val-338–Thr-363. A compositionally biased stretch (polar residues) spans Lys-250 to Asn-262. Basic and acidic residues predominate over residues Ser-369–Gln-381. The interval Ser-369 to Thr-400 is disordered. Over residues Ile-384–Gly-398 the composition is skewed to polar residues. Calponin-like repeat units lie at residues Ile-384 to Thr-409, Ile-431 to Val-456, Val-472 to Thr-497, and Ile-517 to Lys-542.

The protein belongs to the calponin family. Monomer. Interacts with F-actin. Interacts with myosin. In terms of tissue distribution, expressed in the body wall muscles. Isoform a: Expression in the pharynx, anal depressor muscle, uterine muscle, vulva and unidentified neurons in the head and the ventral region. Isoform b: Expression in the body wall muscles, spermatheca, vulva and in the myoepithelial sheath.

It is found in the cytoplasm. The protein localises to the myofibril. Its subcellular location is the sarcomere. The protein resides in the i band. Thin filament-associated protein that is implicated in actin bundling and actin filament dynamics. Exhibits F-actin cross-linking activity. Required for the maintenance of sarcomeric actin organization in striated muscles. Competes with unc-60 isoform b for actin binding and protects actin filaments from depolymerization by unc-60, thereby contributing to actin filament stability. Cooperates with myosin to form actomyosin bundles and inhibits actomyosin ATPase activity and actomyosin motility. Might protect the myofilaments from mechanical stress. Its function is as follows. Acts as a negative regulator of myosin-dependent contractility of smooth muscle-like cells in the somatic gonad. This chain is Protein unc-87 (unc-87), found in Caenorhabditis elegans.